Reading from the N-terminus, the 149-residue chain is Deoxyuridine 5'-triphosphate nucleotidohydrolase (149 aa).

Residues 68–70 (RSG), Asn81, 85–87 (TID), and Lys95 each bind substrate.

It belongs to the dUTPase family. Mg(2+) serves as cofactor.

It catalyses the reaction dUTP + H2O = dUMP + diphosphate + H(+). The protein operates within pyrimidine metabolism; dUMP biosynthesis; dUMP from dCTP (dUTP route): step 2/2. Its function is as follows. This enzyme is involved in nucleotide metabolism: it produces dUMP, the immediate precursor of thymidine nucleotides and it decreases the intracellular concentration of dUTP so that uracil cannot be incorporated into DNA. The sequence is that of Deoxyuridine 5'-triphosphate nucleotidohydrolase from Bdellovibrio bacteriovorus (strain ATCC 15356 / DSM 50701 / NCIMB 9529 / HD100).